Reading from the N-terminus, the 506-residue chain is Maturase K (506 aa).

The protein belongs to the intron maturase 2 family. MatK subfamily.

The protein localises to the plastid. It localises to the chloroplast. In terms of biological role, usually encoded in the trnK tRNA gene intron. Probably assists in splicing its own and other chloroplast group II introns. This Trifolium fragiferum (Strawberry clover) protein is Maturase K.